The sequence spans 339 residues: Biotin synthase (339 aa).

The Radical SAM core domain maps to 55-282 (NAVQLSTLLS…KAVVRLSAGR (228 aa)). Residues Cys70, Cys74, and Cys77 each coordinate [4Fe-4S] cluster. [2Fe-2S] cluster is bound by residues Cys114, Cys145, Cys205, and Arg277.

This sequence belongs to the radical SAM superfamily. Biotin synthase family. In terms of assembly, homodimer. Requires [4Fe-4S] cluster as cofactor. [2Fe-2S] cluster is required as a cofactor.

The enzyme catalyses (4R,5S)-dethiobiotin + (sulfur carrier)-SH + 2 reduced [2Fe-2S]-[ferredoxin] + 2 S-adenosyl-L-methionine = (sulfur carrier)-H + biotin + 2 5'-deoxyadenosine + 2 L-methionine + 2 oxidized [2Fe-2S]-[ferredoxin]. Its pathway is cofactor biosynthesis; biotin biosynthesis; biotin from 7,8-diaminononanoate: step 2/2. Its function is as follows. Catalyzes the conversion of dethiobiotin (DTB) to biotin by the insertion of a sulfur atom into dethiobiotin via a radical-based mechanism. This chain is Biotin synthase, found in Burkholderia ambifaria (strain ATCC BAA-244 / DSM 16087 / CCUG 44356 / LMG 19182 / AMMD) (Burkholderia cepacia (strain AMMD)).